The chain runs to 303 residues: uncharacterized protein (303 aa).

The N-terminal stretch at 1–24 (MNRIALVFLYSLFLFNLAIGRVES) is a signal peptide. The N-linked (GlcNAc...) asparagine glycan is linked to N116. A disordered region spans residues 124–179 (FTRQQQKKSHDDDDDDDDSDSDESKEEEEKKKRDRKHRRDKRQAITQGSQNNTDPN). Residues 135 to 149 (DDDDDDDSDSDESKE) are compositionally biased toward acidic residues. Residues 155–164 (KRDRKHRRDK) are compositionally biased toward basic residues. Over residues 167–178 (AITQGSQNNTDP) the composition is skewed to polar residues.

This is an uncharacterized protein from Caenorhabditis elegans.